A 142-amino-acid chain; its full sequence is Crustacean hyperglycemic hormones (142 aa).

The first 26 residues, 1-26, serve as a signal peptide directing secretion; it reads MYSKTIPAMLAIITVAYLCALPHAHA. The residue at position 67 (Gln-67) is a Pyrrolidone carboxylic acid; partial. Disulfide bonds link Cys-73/Cys-109, Cys-89/Cys-105, and Cys-92/Cys-118. Val-138 carries the post-translational modification Valine amide.

This sequence belongs to the arthropod CHH/MIH/GIH/VIH hormone family. The N-terminus is blocked only in isoform CHH-II but not in isoform CHH-I. In terms of tissue distribution, produced by the medulla terminalis X-organ in the eyestalks and transported to the sinus gland where they are stored and released.

It is found in the secreted. Its function is as follows. Hormone found in the sinus gland of isopods and decapods which controls the blood sugar level. Has a secretagogue action over the amylase released from the midgut gland. May act as a stress hormone and may be involved in the control of molting and reproduction. The polypeptide is Crustacean hyperglycemic hormones (Carcinus maenas (Common shore crab)).